Reading from the N-terminus, the 183-residue chain is Large ribosomal subunit protein uL10 (183 aa).

This sequence belongs to the universal ribosomal protein uL10 family. Part of the ribosomal stalk of the 50S ribosomal subunit. The N-terminus interacts with L11 and the large rRNA to form the base of the stalk. The C-terminus forms an elongated spine to which L12 dimers bind in a sequential fashion forming a multimeric L10(L12)X complex.

Forms part of the ribosomal stalk, playing a central role in the interaction of the ribosome with GTP-bound translation factors. The sequence is that of Large ribosomal subunit protein uL10 from Mesomycoplasma hyopneumoniae (strain 7448) (Mycoplasma hyopneumoniae).